We begin with the raw amino-acid sequence, 207 residues long: uncharacterized protein (207 aa).

S-adenosyl-L-methionine-binding residues include Gly51 and Asp72.

Belongs to the methyltransferase superfamily. YrrT family.

Could be a S-adenosyl-L-methionine-dependent methyltransferase. This is an uncharacterized protein from Staphylococcus carnosus (strain TM300).